The chain runs to 259 residues: Phosphoadenosine 5'-phosphosulfate reductase (259 aa).

Cys-244 acts as the Nucleophile; cysteine thiosulfonate intermediate in catalysis.

It belongs to the PAPS reductase family. CysH subfamily.

It is found in the cytoplasm. The catalysed reaction is [thioredoxin]-disulfide + sulfite + adenosine 3',5'-bisphosphate + 2 H(+) = [thioredoxin]-dithiol + 3'-phosphoadenylyl sulfate. It functions in the pathway sulfur metabolism; hydrogen sulfide biosynthesis; sulfite from sulfate: step 3/3. Functionally, catalyzes the formation of sulfite from phosphoadenosine 5'-phosphosulfate (PAPS) using thioredoxin as an electron donor. In Vibrio campbellii (strain ATCC BAA-1116), this protein is Phosphoadenosine 5'-phosphosulfate reductase.